Here is a 46-residue protein sequence, read N- to C-terminus: Light-harvesting protein B-800/850 beta 2 chain (46 aa).

At 2 to 25 (AERSLSGLTEEEAVAVHAQFQTTF) the chain is on the cytoplasmic side. Residues His18 and His36 each coordinate a bacteriochlorophyll. A helical membrane pass occupies residues 26–46 (SAFIVLAAVAHVLVWVWKPWF).

This sequence belongs to the antenna complex beta subunit family. As to quaternary structure, the core complex is formed by different alpha and beta chains, binding bacteriochlorophyll molecules, and arranged most probably in tetrameric structures disposed around the reaction center.

It is found in the cell inner membrane. Antenna complexes are light-harvesting systems, which transfer the excitation energy to the reaction centers. In Magnetospirillum molischianum (Rhodospirillum molischianum), this protein is Light-harvesting protein B-800/850 beta 2 chain (B2).